The following is a 118-amino-acid chain: RNA guanine-N7 methyltransferase activating subunit (118 aa).

Residue threonine 2 is modified to N-acetylthreonine. The segment at threonine 2 to glycine 55 is interaction with RNMT. Residues leucine 30 to tyrosine 118 are disordered. The residue at position 36 (serine 36) is a Phosphoserine. Positions serine 36–glutamate 42 match the RNMT-activating domain motif. Residues serine 45–asparagine 56 are compositionally biased toward low complexity. Residues asparagine 56–tyrosine 118 are RNA-binding. Basic and acidic residues predominate over residues arginine 57 to arginine 70. Residues aspartate 76 to glutamine 93 show a composition bias toward polar residues. An Omega-N-methylarginine modification is found at arginine 85. Serine 86 bears the Phosphoserine mark. The segment covering proline 98–tyrosine 109 has biased composition (low complexity).

This sequence belongs to the RAM family. As to quaternary structure, interacts with RNMT; this interaction enhances mRNA binding and cap methyltransferase activity.

The protein resides in the nucleus. Functionally, regulatory subunit of the mRNA-capping methyltransferase RNMT:RAMAC complex that methylates the N7 position of the added guanosine to the 5'-cap structure of mRNAs. Promotes the recruitment of the methyl donor, S-adenosyl-L-methionine, to RNMT. Regulates RNMT expression by a post-transcriptional stabilizing mechanism. Binds RNA. The polypeptide is RNA guanine-N7 methyltransferase activating subunit (RAMAC) (Pongo abelii (Sumatran orangutan)).